Here is a 648-residue protein sequence, read N- to C-terminus: 1-deoxy-D-xylulose-5-phosphate synthase (648 aa).

Thiamine diphosphate is bound by residues histidine 73 and 114-116; that span reads SHA. Aspartate 145 is a binding site for Mg(2+). Residues 146–147, asparagine 175, tyrosine 286, and glutamate 367 each bind thiamine diphosphate; that span reads GA. Asparagine 175 serves as a coordination point for Mg(2+).

The protein belongs to the transketolase family. DXPS subfamily. As to quaternary structure, homodimer. Requires Mg(2+) as cofactor. Thiamine diphosphate serves as cofactor.

It catalyses the reaction D-glyceraldehyde 3-phosphate + pyruvate + H(+) = 1-deoxy-D-xylulose 5-phosphate + CO2. Its pathway is metabolic intermediate biosynthesis; 1-deoxy-D-xylulose 5-phosphate biosynthesis; 1-deoxy-D-xylulose 5-phosphate from D-glyceraldehyde 3-phosphate and pyruvate: step 1/1. In terms of biological role, catalyzes the acyloin condensation reaction between C atoms 2 and 3 of pyruvate and glyceraldehyde 3-phosphate to yield 1-deoxy-D-xylulose-5-phosphate (DXP). In Rhodococcus erythropolis (strain PR4 / NBRC 100887), this protein is 1-deoxy-D-xylulose-5-phosphate synthase.